We begin with the raw amino-acid sequence, 448 residues long: UDP-N-acetylmuramoylalanine--D-glutamate ligase (448 aa).

ATP is bound at residue 112–118; sequence GSNAKST.

This sequence belongs to the MurCDEF family.

Its subcellular location is the cytoplasm. It catalyses the reaction UDP-N-acetyl-alpha-D-muramoyl-L-alanine + D-glutamate + ATP = UDP-N-acetyl-alpha-D-muramoyl-L-alanyl-D-glutamate + ADP + phosphate + H(+). Its pathway is cell wall biogenesis; peptidoglycan biosynthesis. Functionally, cell wall formation. Catalyzes the addition of glutamate to the nucleotide precursor UDP-N-acetylmuramoyl-L-alanine (UMA). The polypeptide is UDP-N-acetylmuramoylalanine--D-glutamate ligase (Acinetobacter baylyi (strain ATCC 33305 / BD413 / ADP1)).